A 28-amino-acid polypeptide reads, in one-letter code: Mu-theraphotoxin-Hsp1a (28 aa).

3 disulfide bridges follow: Cys-2–Cys-16, Cys-9–Cys-21, and Cys-15–Cys-25. Position 28 is an asparagine amide (Asn-28).

This sequence belongs to the neurotoxin 30 (phrixotoxin) family. Expressed by the venom gland.

The protein localises to the secreted. Its function is as follows. Potent and selective inhibitor of Nav1.7/SCN9A sodium channels. Inhibits Nav1.7/SCN9A peak current (IC(50)=13 nM). In vivo, does not induce visible signs of toxicity when intravenously injected into mice. This is Mu-theraphotoxin-Hsp1a from Homoeomma sp. (Peruvian tarantula).